A 189-amino-acid polypeptide reads, in one-letter code: Peptidyl-tRNA hydrolase (189 aa).

TRNA is bound at residue Y15. H20 functions as the Proton acceptor in the catalytic mechanism. 3 residues coordinate tRNA: F66, N68, and N114.

The protein belongs to the PTH family. As to quaternary structure, monomer.

It is found in the cytoplasm. The catalysed reaction is an N-acyl-L-alpha-aminoacyl-tRNA + H2O = an N-acyl-L-amino acid + a tRNA + H(+). Its function is as follows. Hydrolyzes ribosome-free peptidyl-tRNAs (with 1 or more amino acids incorporated), which drop off the ribosome during protein synthesis, or as a result of ribosome stalling. Catalyzes the release of premature peptidyl moieties from peptidyl-tRNA molecules trapped in stalled 50S ribosomal subunits, and thus maintains levels of free tRNAs and 50S ribosomes. This Acidithiobacillus ferrooxidans (strain ATCC 23270 / DSM 14882 / CIP 104768 / NCIMB 8455) (Ferrobacillus ferrooxidans (strain ATCC 23270)) protein is Peptidyl-tRNA hydrolase.